We begin with the raw amino-acid sequence, 288 residues long: Pyridoxal kinase PdxY (288 aa).

Substrate-binding positions include serine 9 and 44-45 (TQ). Residues aspartate 111, glutamate 148, and lysine 181 each contribute to the ATP site. Residue aspartate 224 coordinates substrate.

It belongs to the pyridoxine kinase family. PdxY subfamily. Homodimer. Requires Mg(2+) as cofactor.

The catalysed reaction is pyridoxal + ATP = pyridoxal 5'-phosphate + ADP + H(+). Its pathway is cofactor metabolism; pyridoxal 5'-phosphate salvage; pyridoxal 5'-phosphate from pyridoxal: step 1/1. Its function is as follows. Pyridoxal kinase involved in the salvage pathway of pyridoxal 5'-phosphate (PLP). Catalyzes the phosphorylation of pyridoxal to PLP. This Haemophilus influenzae (strain PittEE) protein is Pyridoxal kinase PdxY.